The sequence spans 299 residues: Acetylglutamate kinase (299 aa).

Residues G72–G73, R94, and N196 each bind substrate.

The protein belongs to the acetylglutamate kinase family. ArgB subfamily.

It localises to the cytoplasm. The catalysed reaction is N-acetyl-L-glutamate + ATP = N-acetyl-L-glutamyl 5-phosphate + ADP. It functions in the pathway amino-acid biosynthesis; L-arginine biosynthesis; N(2)-acetyl-L-ornithine from L-glutamate: step 2/4. In terms of biological role, catalyzes the ATP-dependent phosphorylation of N-acetyl-L-glutamate. The sequence is that of Acetylglutamate kinase from Burkholderia vietnamiensis (strain G4 / LMG 22486) (Burkholderia cepacia (strain R1808)).